The chain runs to 97 residues: MANMLRSWMMLAALAVCLLVCLSSFADAYPPKPESPGSNASPEDWAKYHAAVRHYVNLITRQRYGKRSTPEQAVAWLLFGADSSQDAEPRLDYSDQW.

The first 28 residues, 1–28 (MANMLRSWMMLAALAVCLLVCLSSFADA), serve as a signal peptide directing secretion. Tyr-64 carries the tyrosine amide modification. The propeptide at 68 to 97 (STPEQAVAWLLFGADSSQDAEPRLDYSDQW) is C-terminal extension.

The protein belongs to the NPY family.

It localises to the secreted. The protein is Peptide Y of Dicentrarchus labrax (European seabass).